The following is a 148-amino-acid chain: Large ribosomal subunit protein bL9 (148 aa).

It belongs to the bacterial ribosomal protein bL9 family.

Binds to the 23S rRNA. This chain is Large ribosomal subunit protein bL9, found in Desulfitobacterium hafniense (strain DSM 10664 / DCB-2).